The sequence spans 130 residues: Small ribosomal subunit protein uS11 (130 aa).

Belongs to the universal ribosomal protein uS11 family. As to quaternary structure, part of the 30S ribosomal subunit. Interacts with proteins S7 and S18. Binds to IF-3.

In terms of biological role, located on the platform of the 30S subunit, it bridges several disparate RNA helices of the 16S rRNA. Forms part of the Shine-Dalgarno cleft in the 70S ribosome. The protein is Small ribosomal subunit protein uS11 of Xylella fastidiosa (strain M23).